The chain runs to 173 residues: Peptide methionine sulfoxide reductase MsrA (173 aa).

Cys-10 is a catalytic residue.

It belongs to the MsrA Met sulfoxide reductase family.

The catalysed reaction is L-methionyl-[protein] + [thioredoxin]-disulfide + H2O = L-methionyl-(S)-S-oxide-[protein] + [thioredoxin]-dithiol. It catalyses the reaction [thioredoxin]-disulfide + L-methionine + H2O = L-methionine (S)-S-oxide + [thioredoxin]-dithiol. Its function is as follows. Has an important function as a repair enzyme for proteins that have been inactivated by oxidation. Catalyzes the reversible oxidation-reduction of methionine sulfoxide in proteins to methionine. In Nautilia profundicola (strain ATCC BAA-1463 / DSM 18972 / AmH), this protein is Peptide methionine sulfoxide reductase MsrA.